Consider the following 295-residue polypeptide: Indole-3-glycerol phosphate synthase (295 aa).

The protein belongs to the TrpC family.

The catalysed reaction is 1-(2-carboxyphenylamino)-1-deoxy-D-ribulose 5-phosphate + H(+) = (1S,2R)-1-C-(indol-3-yl)glycerol 3-phosphate + CO2 + H2O. The protein operates within amino-acid biosynthesis; L-tryptophan biosynthesis; L-tryptophan from chorismate: step 4/5. This Synechococcus sp. (strain ATCC 27144 / PCC 6301 / SAUG 1402/1) (Anacystis nidulans) protein is Indole-3-glycerol phosphate synthase.